Here is a 223-residue protein sequence, read N- to C-terminus: DNA-directed RNA polymerase III subunit RPC7 (223 aa).

Positions 110–223 (MMPRNKCKKA…SDDNMDEATY (114 aa)) are disordered. Residues 114–125 (NKCKKAGPKPKK) are compositionally biased toward basic residues. The residue at position 133 (T133) is a Phosphothreonine. Over residues 140–155 (DVLKKMEELEKRGDGE) the composition is skewed to basic and acidic residues. S157 is subject to Phosphoserine. Residues 164-173 (KEGSKEKSKE) are compositionally biased toward basic and acidic residues. Acidic residues-rich tracts occupy residues 174 to 198 (GDDDDDDDAAEQEEYDEEEQEEEND) and 205 to 223 (EDGDDFGADSDDNMDEATY).

This sequence belongs to the eukaryotic RPC7 RNA polymerase subunit family. Component of the RNA polymerase III complex consisting of 17 subunits: a ten-subunit horseshoe-shaped catalytic core composed of POLR3A/RPC1, POLR3B/RPC2, POLR1C/RPAC1, POLR1D/RPAC2, POLR3K/RPC10, POLR2E/RPABC1, POLR2F/RPABC2, POLR2H/RPABC3, POLR2K/RPABC4 and POLR2L/RPABC5; a mobile stalk composed of two subunits POLR3H/RPC8 and CRCP/RPC9, protruding from the core and functioning primarily in transcription initiation; and additional subunits homologous to general transcription factors of the RNA polymerase II machinery, POLR3C/RPC3-POLR3F/RPC6-POLR3G/RPC7 heterotrimer required for transcription initiation and POLR3D/RPC4-POLR3E/RPC5 heterodimer involved in both transcription initiation and termination. Directly interacts with POLR3C/RPC62. Also found in a trimeric complex with POLR3C/RPC3 and POLR3GL. In terms of tissue distribution, barely detectable in differentiated tissues. Expressed in embryonic stem cells and in other dividing cells, such as some tumor cell lines.

The protein localises to the nucleus. It is found in the cytoplasm. Functionally, DNA-dependent RNA polymerase catalyzes the transcription of DNA into RNA using the four ribonucleoside triphosphates as substrates. Specific peripheric component of RNA polymerase III (Pol III) which synthesizes small non-coding RNAs including 5S rRNA, snRNAs, tRNAs and miRNAs from at least 500 distinct genomic loci. Acts as a long tether that bridges POLR3C/RPC3-POLR3F/RPC6-POLR3G/RPC7 heterotrimer and the mobile stalk of Pol III, coordinating the dynamics of Pol III stalk and clamp modules during the transition from apo to elongation state. Pol III exists as two alternative complexes defined by the mutually exclusive incorporation of subunit POLR3G/RPC7alpha or POLR3GL/RPC7beta. POLR3G/RPC7alpha modulates Pol III transcriptome by specifically enhancing the transcription of snaR-A non-coding RNAs. At resting state, occupies the active site of apo Pol III and keeps Pol III in an autoinhibitory mode, preventing non-specific transcription. Pol III plays a key role in sensing and limiting infection by intracellular bacteria and DNA viruses. Acts as a nuclear and cytosolic DNA sensor involved in innate immune response. Can sense non-self dsDNA that serves as template for transcription into dsRNA. The non-self RNA polymerase III transcripts, such as Epstein-Barr virus-encoded RNAs (EBERs), induce type I interferon and NF-kappa-B through the RIG-I pathway. The chain is DNA-directed RNA polymerase III subunit RPC7 from Homo sapiens (Human).